The sequence spans 405 residues: L-rhamnonate dehydratase (405 aa).

Substrate-binding residues include H33 and R59. Positions 226, 252, and 280 each coordinate Mg(2+). The active-site Proton acceptor is H329. Substrate is bound at residue E349.

It belongs to the mandelate racemase/muconate lactonizing enzyme family. RhamD subfamily. Homooctamer; tetramer of dimers. Mg(2+) serves as cofactor.

It catalyses the reaction L-rhamnonate = 2-dehydro-3-deoxy-L-rhamnonate + H2O. Catalyzes the dehydration of L-rhamnonate to 2-keto-3-deoxy-L-rhamnonate (KDR). The protein is L-rhamnonate dehydratase of Escherichia coli O6:H1 (strain CFT073 / ATCC 700928 / UPEC).